The chain runs to 612 residues: UvrABC system protein C (612 aa).

The 79-residue stretch at 20-98 (THSGVYRMLD…IKQHRPKYNI (79 aa)) folds into the GIY-YIG domain. Residues 208–243 (SSVLEEISANMYQASEDMEYEKAQVYRDQLVVLRKL) enclose the UVR domain.

The protein belongs to the UvrC family. As to quaternary structure, interacts with UvrB in an incision complex.

Its subcellular location is the cytoplasm. Its function is as follows. The UvrABC repair system catalyzes the recognition and processing of DNA lesions. UvrC both incises the 5' and 3' sides of the lesion. The N-terminal half is responsible for the 3' incision and the C-terminal half is responsible for the 5' incision. The chain is UvrABC system protein C from Francisella tularensis subsp. holarctica (strain LVS).